Reading from the N-terminus, the 1311-residue chain is Protein PARALOG OF AIPP2 (1311 aa).

3 disordered regions span residues 1 to 21 (MADRRVGKRQMGQRGFSKVES), 114 to 141 (ISDDSGAAAMTSKPSLSGSRMKHKVSAS), and 178 to 280 (GNKD…EMVE). Residues 213-240 (NHDDRVSSEKGNFKEKSRPGGNKERQEP) show a composition bias toward basic and acidic residues. A compositionally biased stretch (low complexity) spans 258-270 (SKSSSSNSSAVSE). The PHD-type zinc-finger motif lies at 283–334 (VKVCDICGDAGREDLLAICSGCSDGAEHTYCMREMLDEVPEGDWLCEECAEE). Residues Cys-286, Cys-289, Cys-301, Cys-304, His-310, Cys-313, Cys-328, and Cys-331 each coordinate Zn(2+). Residues 328–348 (CEECAEEAEKQKQEAKRKRET) adopt a coiled-coil conformation. 8 disordered regions span residues 369 to 390 (PDAKRQVVEASTGSPKKSILPR), 411 to 440 (NHQTSFSDDTESARSAGSQLQPPKGAFLKS), 460 to 701 (HPRQ…EDLN), 975 to 1050 (TNPQ…PSKK), 1059 to 1078 (EAGVNHIPPQVTGSNSGDSL), 1087 to 1138 (EQEL…NPAN), 1152 to 1186 (NDGLCEGSPNKKLKTENGSSSLCRDTSGHDSGIMK), and 1249 to 1311 (LSRS…DLPR). Residues 411-431 (NHQTSFSDDTESARSAGSQLQ) show a composition bias toward polar residues. Residues 460 to 472 (HPRQKTGKEDTAL) are compositionally biased toward basic and acidic residues. Residues 487–502 (PSRTTDAGNSGGSDSQ) show a composition bias toward polar residues. A compositionally biased stretch (basic and acidic residues) spans 512 to 528 (HSQEGKSLKQVKDRNRE). Residues 529–552 (ANASASSIDQKLKSRGNSSVSHAN) show a composition bias toward polar residues. A compositionally biased stretch (basic and acidic residues) spans 553 to 566 (NNRDLKGLQSDGKR). Positions 569-607 (LTKQVSNLSRNRLENSVVSGGDISTNEKCSASEQSSSQA) are enriched in polar residues. Basic and acidic residues predominate over residues 640–653 (VPREVGKKSKEAFS). Polar residues-rich tracts occupy residues 668 to 694 (PSSQKGGQTAESSDTSGVSDSDLSTTK), 977 to 988 (PQKNTSLPTSNV), and 1014 to 1025 (LRESSSNGIETR). Residues 1026–1050 (NGTDARSHENPNNRESSIERSPSKK) show a composition bias toward basic and acidic residues. Positions 1087 to 1096 (EQELGGRKDL) are enriched in basic and acidic residues. The segment covering 1250 to 1263 (SRSSNSGEQSNNSM) has biased composition (polar residues). Residues 1256–1276 (GEQSNNSMNKEKQKADEEEED) are a coiled coil. Over residues 1280–1289 (VAASLSLSLS) the composition is skewed to low complexity.

Part of the BAH-PHD bivalent histone reader complex that contains AIPP2, PAIPP2 and AIPP3/BDT1; the BAH-PHD module associates with CPL2 to form the BAH-PHD-CPL2 complex (BPC) for transcriptional repression. Binds directly to AIPP3/BDT1 and CPL2, but not to AIPP2. Expressed ubiquitously.

Functionally, together with AIPP2 and AIPP3/BDT1, cooperates to form a BAH-PHD bivalent histone reader complex able to read histone H3 lysine 27 trimethylation (H3K27me3) and low-methylated H3K4 histone marks in order to regulate transcription, especially to prevent early flowering; promotes AIPP3/BDT1 binding to H3K27me3. CPL2 is subsequently recruited to form a BAH-PHD-CPL2 complex (BPC) in order to silence several H3K27me3 and low-methylated H3K4 enriched loci, including AGO5, via the phosphorylation state-dependent inhibition of Pol II release from the transcriptional start site (e.g. Ser5P-Pol II dephosphorylation). The BPC complex represses flowering by inhibiting the expression of several genes, including AGL6, FT, FUL and SOC1. The chain is Protein PARALOG OF AIPP2 from Arabidopsis thaliana (Mouse-ear cress).